We begin with the raw amino-acid sequence, 290 residues long: Endoplasmic reticulum-Golgi intermediate compartment protein 1 (290 aa).

Topologically, residues 1–26 (MPFDFRRFDIYRKVPKDLTQPTYTGA) are cytoplasmic. The helical transmembrane segment at 27–47 (IISICCCLFILFLFLSELTGF) threads the bilayer. Over 48–254 (ITTEVVNELY…RRQPLYRFIT (207 aa)) the chain is Lumenal. An N-linked (GlcNAc...) asparagine glycan is attached at Asn74. Residues 255–275 (TICAIIGGTFTVAGILDSCIF) traverse the membrane as a helical segment. Over 276–290 (TASEAWKKIQLGKMH) the chain is Cytoplasmic.

This sequence belongs to the ERGIC family. May form a heteromeric complex composed of ERGIC1, ERGIC2 and ERGIC3. Within the complex, the interaction with ERGIC3 is direct. Interacts with ERGIC3/ERV46. In terms of processing, N-glycosylated.

Its subcellular location is the endoplasmic reticulum membrane. The protein localises to the endoplasmic reticulum-Golgi intermediate compartment membrane. The protein resides in the golgi apparatus membrane. Its function is as follows. Possible role in transport between endoplasmic reticulum and Golgi. The chain is Endoplasmic reticulum-Golgi intermediate compartment protein 1 (ERGIC1) from Homo sapiens (Human).